The sequence spans 239 residues: Ribonuclease 3 (239 aa).

An RNase III domain is found at 12–137 (RAKLEGLIGH…LIAAIYLDGG (126 aa)). Glutamate 50 contacts Mg(2+). Aspartate 54 is an active-site residue. 2 residues coordinate Mg(2+): aspartate 123 and glutamate 126. The active site involves glutamate 126. Residues 162-231 (DAKTELQEWS…ATKMLEREGI (70 aa)) form the DRBM domain.

Belongs to the ribonuclease III family. As to quaternary structure, homodimer. Mg(2+) serves as cofactor.

Its subcellular location is the cytoplasm. It catalyses the reaction Endonucleolytic cleavage to 5'-phosphomonoester.. Its function is as follows. Digests double-stranded RNA. Involved in the processing of primary rRNA transcript to yield the immediate precursors to the large and small rRNAs (23S and 16S). Processes some mRNAs, and tRNAs when they are encoded in the rRNA operon. Processes pre-crRNA and tracrRNA of type II CRISPR loci if present in the organism. The sequence is that of Ribonuclease 3 from Rhizobium leguminosarum bv. trifolii (strain WSM2304).